A 515-amino-acid polypeptide reads, in one-letter code: Thioredoxin domain-containing protein 2 (515 aa).

A disordered region spans residues 1-23 (MTLNNGGKANERGSNENPLQALS). Phosphoserine occurs at positions 14 and 39. The segment at 51 to 390 (TLHMSTEESE…NTIKSSEEDV (340 aa)) is disordered. Composition is skewed to polar residues over residues 61–75 (FPQQVSSTPMFSENT) and 85–136 (KPSS…TNST). A run of 21 repeats spans residues 92–106 (QLKQENISKSSGYSK), 107–121 (QTNYSNTPKSLAKTT), 122–136 (HPKQGSTLKPATNST), 137–151 (HYREDDIPKSSEDII), 152–166 (QPKKGDRPKSSEDII), 167–181 (QSKKEDRPKSSEDII), 182–196 (QSKKEDRPKSSEDII), 197–211 (QSKKEDRPKSSEDII), 212–226 (QSKKEDRPKSSEDII), 227–241 (QPKKEDRPKSSEDSV), 242–256 (PSKKGDRPKSSEDSV), 257–271 (QPKKEDRPKSSEDSV), 272–286 (QSKEGEVHKPLKDSI), 287–301 (QSKETKVPKSPQDSI), 302–316 (QSKEDKTHRPLKDSV), 317–331 (QSKESEEPKSSHESI), 332–346 (QSKEDKIHKPLKDSI), 347–362 (PSKEGDIPKSPEDTIQ), 363–375 (SQEEITASEEDTI), 376–390 (QSQEGNTIKSSEEDV), and 391–405 (QLSESKLLGLGAEIE). The 21 X 15 AA approximate tandem repeat of Q-P-K-X-G-D-I-P-K-S-[PS]-E-[KE]-X-I stretch occupies residues 92–405 (QLKQENISKS…KLLGLGAEIE (314 aa)). 2 stretches are compositionally biased toward basic and acidic residues: residues 137-293 (HYRE…ETKV) and 302-358 (QSKE…KSPE). At S146 the chain carries Phosphoserine. Residues 375-384 (IQSQEGNTIK) show a composition bias toward polar residues. The 118-residue stretch at 398 to 515 (LGLGAEIETL…KLERSISELK (118 aa)) folds into the Thioredoxin domain. A disulfide bridge links C442 with C445.

In terms of tissue distribution, testis-specific. Strongly expressed in the testicular seminiferous tubules, mostly in the round spermatids.

It is found in the cytoplasm. Functionally, probably plays a regulatory role in sperm development. May participate in regulation of fibrous sheath (FS) assembly by supporting the formation of disulfide bonds during sperm tail morphogenesis. May also be required to rectify incorrect disulfide pairing and generate suitable pairs between the FS constituents. Can reduce disulfide bonds in vitro in the presence of NADP and thioredoxin reductase. In Mus musculus (Mouse), this protein is Thioredoxin domain-containing protein 2 (Txndc2).